The primary structure comprises 178 residues: Interleukin-1 receptor antagonist protein (178 aa).

Residues 1-26 (MEICRGPYSHLISLLLILLFRSESAG) form the signal peptide. An intrachain disulfide couples cysteine 92 to cysteine 142. N-linked (GlcNAc...) asparagine glycosylation occurs at asparagine 110.

This sequence belongs to the IL-1 family.

It localises to the secreted. Its function is as follows. Anti-inflammatory antagonist of interleukin-1 family of proinflammatory cytokines such as interleukin-1beta/IL1B and interleukin-1alpha/IL1A. Protects from immune dysregulation and uncontrolled systemic inflammation triggered by IL1 for a range of innate stimulatory agents such as pathogens. In Rattus norvegicus (Rat), this protein is Interleukin-1 receptor antagonist protein (Il1rn).